The chain runs to 132 residues: Pro-MCH 1 (132 aa).

The signal sequence occupies residues 1 to 24; it reads MRDSVLSVIFALALFLECYTPSMA. A disulfide bond links C120 and C129.

Belongs to the MCH family. Pituitary gland. Produced in neurons of lateral basal hypothalamus which project both to the brain and to the neural lobe of the pituitary gland from where MCH is released.

Functionally, plays a role in skin pigmentation by antagonizing the action of melanotropin alpha. Induces melanin concentration within the melanophores. May participate in the control of the hypothalamo-pituitary adrenal gland axis by inhibiting the release of ACTH. This Oncorhynchus kisutch (Coho salmon) protein is Pro-MCH 1 (mch1).